An 859-amino-acid polypeptide reads, in one-letter code: DNA mismatch repair protein MutS (859 aa).

618–625 (GPNMGGKS) serves as a coordination point for ATP.

It belongs to the DNA mismatch repair MutS family.

In terms of biological role, this protein is involved in the repair of mismatches in DNA. It is possible that it carries out the mismatch recognition step. This protein has a weak ATPase activity. This is DNA mismatch repair protein MutS from Shewanella halifaxensis (strain HAW-EB4).